Here is a 145-residue protein sequence, read N- to C-terminus: 3-dehydroquinate dehydratase (145 aa).

The Proton acceptor role is filled by Tyr24. Substrate-binding residues include Asn75, His81, and Asp88. The Proton donor role is filled by His102. Substrate-binding positions include 103 to 104 (LS) and Arg113.

The protein belongs to the type-II 3-dehydroquinase family. As to quaternary structure, homododecamer.

The catalysed reaction is 3-dehydroquinate = 3-dehydroshikimate + H2O. It functions in the pathway metabolic intermediate biosynthesis; chorismate biosynthesis; chorismate from D-erythrose 4-phosphate and phosphoenolpyruvate: step 3/7. In terms of biological role, catalyzes a trans-dehydration via an enolate intermediate. The polypeptide is 3-dehydroquinate dehydratase (Chelativorans sp. (strain BNC1)).